The sequence spans 137 residues: MRTLWIVAVWLMGVEGNLYQFGKMIKHKTGKSALLSYSAYGCYCGWGGQGKPQDATDHCCFVHDCCYGEVSGCYPKTAFTLKFENQDIICGDEDPCNRAVCECDRVAAICFGENVNTSDKKYLFYSSSYCEEESEQC.

The first 16 residues, 1 to 16 (MRTLWIVAVWLMGVEG), serve as a signal peptide directing secretion. Intrachain disulfides connect C42–C130, C44–C60, C59–C110, C65–C137, C66–C103, C73–C96, and C90–C101. Residues Y43, G45, and G47 each coordinate Ca(2+). The active site involves H63. Position 64 (D64) interacts with Ca(2+). D104 is a catalytic residue.

The protein belongs to the phospholipase A2 family. Group II subfamily. D49 sub-subfamily. Ca(2+) is required as a cofactor. In terms of processing, glycosylated (2.5%). Expressed by the venom gland.

It is found in the secreted. The catalysed reaction is a 1,2-diacyl-sn-glycero-3-phosphocholine + H2O = a 1-acyl-sn-glycero-3-phosphocholine + a fatty acid + H(+). In terms of biological role, snake venom phospholipase A2 (PLA2) that inhibits blood coagulation and platelet aggregation induced by ADP and arachidonic acid. Inhibits tumor cell adhesion and migration in a dose-dependent manner. Abolishes the attachment of human brain microvascular endothelial cells (HBMEC) to fibrinogen (IC(50)=0.12 uM) and dramatically reduces its adhesion to fibronectin (IC(50)=0.12 uM), whereas no effect is observed on type I collagen, vitronectin or laminin 1. Also blocks the cell migration toward fibronectin and fibrinogen. These effects are not dependent of the catalytic activity, but are mediated by alpha-5/beta-1 (ITGA5/ITGB1) and alpha-v-containing (ITGAV) integrins. Also shows anti-angiogenic activity in chicken chorioallantoix membrane assay. Has a relatively high enzymatic activity. PLA2 catalyzes the calcium-dependent hydrolysis of the 2-acyl groups in 3-sn-phosphoglycerides. This chain is Acidic phospholipase A2 CC-PLA2-1, found in Cerastes cerastes (Horned desert viper).